Here is a 522-residue protein sequence, read N- to C-terminus: BAR/IMD domain-containing adapter protein 2-like 2 (522 aa).

The IMD domain occupies 1–239 (MAPEMDQFYR…HSPGLLGPAL (239 aa)). Disordered regions lie at residues 220–325 (SEAS…GGGG) and 404–502 (PMSP…GTNP). Phosphoserine is present on residues serine 231, serine 272, and serine 303. Polar residues predominate over residues 297-317 (RTPSASSLYASSTQRSRSNSF). In terms of domain architecture, SH3 spans 324–387 (GGARRVRALV…PEAYVKPVEE (64 aa)). Low complexity predominate over residues 443 to 456 (SQSRSRTPSRVPSR). A compositionally biased stretch (pro residues) spans 457-466 (APSPAPPPLP). 2 positions are modified to phosphoserine: serine 472 and serine 475.

As to expression, expressed in the epithelial layer of the intestine and in the kidney.

The protein resides in the cell membrane. It localises to the cell junction. Its subcellular location is the cytoplasmic vesicle membrane. Phosphoinositides-binding protein that induces the formation of planar or gently curved membrane structures. Binds to phosphoinositides, including to phosphatidylinositol 4,5-bisphosphate (PtdIns(4,5)P2) headgroups. There seems to be no clear preference for a specific phosphoinositide. In Mus musculus (Mouse), this protein is BAR/IMD domain-containing adapter protein 2-like 2 (Baiap2l2).